Consider the following 255-residue polypeptide: tRNA (guanine-N(1)-)-methyltransferase (255 aa).

Residues G113 and 133–138 each bind S-adenosyl-L-methionine; that span reads VGDFVL.

The protein belongs to the RNA methyltransferase TrmD family. As to quaternary structure, homodimer.

Its subcellular location is the cytoplasm. The enzyme catalyses guanosine(37) in tRNA + S-adenosyl-L-methionine = N(1)-methylguanosine(37) in tRNA + S-adenosyl-L-homocysteine + H(+). Functionally, specifically methylates guanosine-37 in various tRNAs. The polypeptide is tRNA (guanine-N(1)-)-methyltransferase (Francisella philomiragia subsp. philomiragia (strain ATCC 25017 / CCUG 19701 / FSC 153 / O#319-036)).